Consider the following 193-residue polypeptide: DNA damage-inducible transcript 4-like protein (193 aa).

This sequence belongs to the DDIT4 family. As to expression, expressed in heart, skeletal muscle and testis.

It is found in the cytoplasm. Its function is as follows. Inhibits cell growth by regulating the TOR signaling pathway upstream of the TSC1-TSC2 complex and downstream of AKT1. This chain is DNA damage-inducible transcript 4-like protein (Ddit4l), found in Rattus norvegicus (Rat).